A 225-amino-acid polypeptide reads, in one-letter code: UPF0758 protein NMC1174 (225 aa).

One can recognise an MPN domain in the interval 102-224 (VLSDPDTVAD…VRSFRQLGLM (123 aa)). Residues histidine 173, histidine 175, and aspartate 186 each coordinate Zn(2+). Residues 173–186 (HNHPGGSPEPSQED) carry the JAMM motif motif.

This sequence belongs to the UPF0758 family.

The chain is UPF0758 protein NMC1174 from Neisseria meningitidis serogroup C / serotype 2a (strain ATCC 700532 / DSM 15464 / FAM18).